The sequence spans 101 residues: Small ribosomal subunit protein uS14 (101 aa).

This sequence belongs to the universal ribosomal protein uS14 family. As to quaternary structure, part of the 30S ribosomal subunit. Contacts proteins S3 and S10.

Binds 16S rRNA, required for the assembly of 30S particles and may also be responsible for determining the conformation of the 16S rRNA at the A site. The chain is Small ribosomal subunit protein uS14 from Buchnera aphidicola subsp. Acyrthosiphon pisum (strain APS) (Acyrthosiphon pisum symbiotic bacterium).